A 304-amino-acid polypeptide reads, in one-letter code: Pyridoxal 5'-phosphate synthase subunit PdxS (304 aa).

A D-ribose 5-phosphate-binding site is contributed by aspartate 34. Residue lysine 91 is the Schiff-base intermediate with D-ribose 5-phosphate of the active site. Residue glycine 163 participates in D-ribose 5-phosphate binding. Position 175 (arginine 175) interacts with D-glyceraldehyde 3-phosphate. D-ribose 5-phosphate is bound by residues glycine 224 and 245–246 (GS).

The protein belongs to the PdxS/SNZ family. In the presence of PdxT, forms a dodecamer of heterodimers.

The catalysed reaction is aldehydo-D-ribose 5-phosphate + D-glyceraldehyde 3-phosphate + L-glutamine = pyridoxal 5'-phosphate + L-glutamate + phosphate + 3 H2O + H(+). Its pathway is cofactor biosynthesis; pyridoxal 5'-phosphate biosynthesis. Functionally, catalyzes the formation of pyridoxal 5'-phosphate from ribose 5-phosphate (RBP), glyceraldehyde 3-phosphate (G3P) and ammonia. The ammonia is provided by the PdxT subunit. Can also use ribulose 5-phosphate and dihydroxyacetone phosphate as substrates, resulting from enzyme-catalyzed isomerization of RBP and G3P, respectively. The chain is Pyridoxal 5'-phosphate synthase subunit PdxS from Cutibacterium acnes (strain DSM 16379 / KPA171202) (Propionibacterium acnes).